Reading from the N-terminus, the 261-residue chain is Putative ketoacyl reductase (261 aa).

Residues Thr15, Ser16, Ile18, Arg38, Gly39, Asp63, Val64, Asn90, Tyr157, Lys161, Val190, and Thr192 each coordinate NADP(+). The Proton acceptor role is filled by Tyr157.

Belongs to the short-chain dehydrogenases/reductases (SDR) family. In terms of assembly, homotetramer.

Its pathway is antibiotic biosynthesis; actinorhodin biosynthesis. The chain is Putative ketoacyl reductase (actIII) from Streptomyces coelicolor (strain ATCC BAA-471 / A3(2) / M145).